The primary structure comprises 959 residues: Translation initiation factor IF-2 (959 aa).

The segment covering 1-10 has biased composition (basic and acidic residues); the sequence is MSDKTNDDKT. The tract at residues 1 to 374 is disordered; sequence MSDKTNDDKT…SQMQETREKI (374 aa). A compositionally biased stretch (polar residues) spans 27–37; the sequence is EQSTVRQNFSH. Low complexity-rich tracts occupy residues 63–118 and 128–138; these read AAAA…VTKP and QRPGGQQAQRP. Basic and acidic residues-rich tracts occupy residues 154–225 and 232–241; these read SEMD…EAAK and ARSERRDDAR. Low complexity predominate over residues 246–284; sequence GARPQQAGRPQGGRPQPAGRPQQGSPRPAPIIADAAPIA. Residues 318–333 show a composition bias toward basic and acidic residues; it reads PEVRAPKVVKGEDDRR. A tr-type G domain is found at 457–626; it reads SRPPVVTIMG…LLQAEMLDLK (170 aa). The G1 stretch occupies residues 466 to 473; it reads GHVDHGKT. 466-473 lines the GTP pocket; the sequence is GHVDHGKT. Residues 491 to 495 are G2; that stretch reads GITQH. The tract at residues 512 to 515 is G3; that stretch reads DTPG. Residues 512 to 516 and 566 to 569 contribute to the GTP site; these read DTPGH and NKID. A G4 region spans residues 566 to 569; the sequence is NKID. The segment at 602–604 is G5; the sequence is SAK.

Belongs to the TRAFAC class translation factor GTPase superfamily. Classic translation factor GTPase family. IF-2 subfamily.

The protein resides in the cytoplasm. Functionally, one of the essential components for the initiation of protein synthesis. Protects formylmethionyl-tRNA from spontaneous hydrolysis and promotes its binding to the 30S ribosomal subunits. Also involved in the hydrolysis of GTP during the formation of the 70S ribosomal complex. This is Translation initiation factor IF-2 from Brucella ovis (strain ATCC 25840 / 63/290 / NCTC 10512).